The sequence spans 269 residues: Tryptophan synthase alpha chain (269 aa).

Catalysis depends on proton acceptor residues E50 and D61.

It belongs to the TrpA family. In terms of assembly, tetramer of two alpha and two beta chains.

It catalyses the reaction (1S,2R)-1-C-(indol-3-yl)glycerol 3-phosphate + L-serine = D-glyceraldehyde 3-phosphate + L-tryptophan + H2O. The protein operates within amino-acid biosynthesis; L-tryptophan biosynthesis; L-tryptophan from chorismate: step 5/5. In terms of biological role, the alpha subunit is responsible for the aldol cleavage of indoleglycerol phosphate to indole and glyceraldehyde 3-phosphate. In Francisella tularensis subsp. tularensis (strain WY96-3418), this protein is Tryptophan synthase alpha chain.